The following is a 437-amino-acid chain: Methionine aminopeptidase 2 (437 aa).

A disordered region spans residues 1-90; that stretch reads MAAQAAPAEE…LFPNNQYPKG (90 aa). The segment covering 10-20 has biased composition (basic and acidic residues); that stretch reads ELSKLSVDETK. The segment covering 31 to 42 has biased composition (acidic residues); sequence SDAESGDEEAEE. The span at 52–66 shows a compositional bias: basic residues; the sequence is AKKKKKRKPKKKKKA. Substrate is bound at residue His-190. Residues Asp-210, Asp-221, and His-290 each coordinate a divalent metal cation. Residue His-298 coordinates substrate. 2 residues coordinate a divalent metal cation: Glu-323 and Glu-418.

Belongs to the peptidase M24A family. Methionine aminopeptidase eukaryotic type 2 subfamily. The cofactor is Co(2+). Zn(2+) serves as cofactor. It depends on Mn(2+) as a cofactor. Requires Fe(2+) as cofactor.

Its subcellular location is the cytoplasm. It catalyses the reaction Release of N-terminal amino acids, preferentially methionine, from peptides and arylamides.. Cotranslationally removes the N-terminal methionine from nascent proteins. The N-terminal methionine is often cleaved when the second residue in the primary sequence is small and uncharged (Met-Ala-, Cys, Gly, Pro, Ser, Thr, or Val). The protein is Methionine aminopeptidase 2 of Neurospora crassa (strain ATCC 24698 / 74-OR23-1A / CBS 708.71 / DSM 1257 / FGSC 987).